Reading from the N-terminus, the 119-residue chain is Myohemerythrin-1 (119 aa).

The Fe cation site is built by H25, H55, N58, E59, H74, H78, H107, and D112.

It belongs to the hemerythrin family. In terms of assembly, monomer. In terms of tissue distribution, muscle.

Functionally, myohemerythrin is an oxygen-binding protein found in the retractor muscles of certain worms. The oxygen-binding site contains two iron atoms. In Phascolopsis gouldii (Peanut worm), this protein is Myohemerythrin-1.